Reading from the N-terminus, the 436-residue chain is DEAD-box ATP-dependent RNA helicase CshB (436 aa).

The short motif at 4–32 (QTFTQYDFKPFLIDAVRELRFTEPTGIQQ) is the Q motif element. Residues 35–209 (FPVVKKGVSV…KKYMENPEHI (175 aa)) form the Helicase ATP-binding domain. Residue 48-55 (SQTGSGKT) participates in ATP binding. The short motif at 157–160 (DEAD) is the DEAD box element. The region spanning 240–388 (MLLQFKPYLA…WADLGERRRR (149 aa)) is the Helicase C-terminal domain. The disordered stretch occupies residues 385 to 436 (RRRRKSRKKPNDELDVMATKVIKKPKKVKPNYKRKLATERDKVKRKYSNKKR). 2 stretches are compositionally biased toward basic residues: residues 405–419 (VIKK…YKRK) and 427–436 (VKRKYSNKKR).

The protein belongs to the DEAD box helicase family. CshB subfamily.

Its subcellular location is the cytoplasm. It catalyses the reaction ATP + H2O = ADP + phosphate + H(+). Probable DEAD-box RNA helicase. May work in conjunction with the cold shock proteins to ensure proper initiation of transcription at low and optimal temperatures. Unwinds dsRNA in both 5'- and 3'-directions and shows RNA-dependent ATPase activity. Probably has a somewhat redundant function with CshA, as cshA can partially complement the growth effects of a cshB deletion. This chain is DEAD-box ATP-dependent RNA helicase CshB, found in Bacillus cereus (strain ATCC 14579 / DSM 31 / CCUG 7414 / JCM 2152 / NBRC 15305 / NCIMB 9373 / NCTC 2599 / NRRL B-3711).